The following is a 152-amino-acid chain: Probable methionine-R-sulfoxide reductase B (152 aa).

In terms of domain architecture, MsrB spans 27–151; it reads QTEWKSVLPN…NSVCMAFEKK (125 aa). Zn(2+) is bound by residues Cys-66, Cys-69, Cys-116, and Cys-119. The active-site Nucleophile is Cys-140.

The protein belongs to the MsrB Met sulfoxide reductase family. The cofactor is Zn(2+).

The enzyme catalyses L-methionyl-[protein] + [thioredoxin]-disulfide + H2O = L-methionyl-(R)-S-oxide-[protein] + [thioredoxin]-dithiol. Functionally, methionine-sulfoxide reductase that specifically reduces methionine (R)-sulfoxide back to methionine. While in many cases, methionine oxidation is the result of random oxidation following oxidative stress, methionine oxidation is also a post-translational modification that takes place on specific residue. This is Probable methionine-R-sulfoxide reductase B from Caenorhabditis elegans.